Here is a 372-residue protein sequence, read N- to C-terminus: Testis-specific serine/threonine-protein kinase 5 (372 aa).

The region spanning 27–302 (LLSSKKIGSG…LQQVAAHCWM (276 aa)) is the Protein kinase domain. ATP contacts are provided by residues 33-41 (IGSGAFSKV) and lysine 72. Aspartate 173 serves as the catalytic Proton acceptor. Residues 314–372 (GAPREQDHSWSTVAPDNTEPDRDTRHARSKGSSSSSGRTSPRRPSLAQLCNTWKPAPEQ) are disordered. Residues 343–358 (KGSSSSSGRTSPRRPS) show a composition bias toward low complexity.

It belongs to the protein kinase superfamily. CAMK Ser/Thr protein kinase family. Requires Mg(2+) as cofactor. In terms of processing, autophosphorylated.

It catalyses the reaction L-seryl-[protein] + ATP = O-phospho-L-seryl-[protein] + ADP + H(+). The catalysed reaction is L-threonyl-[protein] + ATP = O-phospho-L-threonyl-[protein] + ADP + H(+). Its activity is regulated as follows. Activated by phosphorylation on Thr-207, potentially by autophosphorylation. Its function is as follows. May be involved in a signaling pathway during male germ cell development or mature sperm function. This is Testis-specific serine/threonine-protein kinase 5 from Mus musculus (Mouse).